The chain runs to 344 residues: Putative 2-hydroxyacid dehydrogenase YoaD (344 aa).

Residue Asp193 participates in NAD(+) binding. Arg251 is a catalytic residue. Asp275 serves as a coordination point for NAD(+). Glu280 is an active-site residue. His300 serves as the catalytic Proton donor.

The protein belongs to the D-isomer specific 2-hydroxyacid dehydrogenase family.

The sequence is that of Putative 2-hydroxyacid dehydrogenase YoaD (yoaD) from Bacillus subtilis (strain 168).